We begin with the raw amino-acid sequence, 377 residues long: MQQRVIVGMSGGVDSSVSAALLLQQGYQVEGLFMKNWEEDDGTEYCTAMEDLADAQAVADKIGIKLHTANFAMEYWDRVFEHFLAEYAAGRTPNPDILCNKEIKFRAFLDHAMTLGADFIATGHYARRAETAYNSKGEAYAPLLRGLDKNKDQTYFLHAVHGREINKTLFPVGEIEKPEVRRIAEELDLATAKKKDSTGICFIGERRFNDFLKQYLPAQPGKIVLDNGKEVGEHHGLMYYTLGQRGGIGLGGMKGASEGAWFVLHKDVANNRLVVGQGHDHPLMQSTQLWSEAIDWVAGEQNIPAEGLRCTAKTRYRQPDQACTVFIDENSEHGVRVEFDEPQRAVTPGQSVVFYSDEVCLGGGVIHHTNAPTPNFI.

Residues Gly8–Ser15 and Met34 contribute to the ATP site. The interaction with target base in tRNA stretch occupies residues Asn94–Asp96. The active-site Nucleophile is the Cys99. A disulfide bridge connects residues Cys99 and Cys201. Gly123 lines the ATP pocket. Residues Lys151 to Gln153 form an interaction with tRNA region. Catalysis depends on Cys201, which acts as the Cysteine persulfide intermediate. The interaction with tRNA stretch occupies residues Arg315 to Tyr316.

This sequence belongs to the MnmA/TRMU family.

The protein resides in the cytoplasm. The catalysed reaction is S-sulfanyl-L-cysteinyl-[protein] + uridine(34) in tRNA + AH2 + ATP = 2-thiouridine(34) in tRNA + L-cysteinyl-[protein] + A + AMP + diphosphate + H(+). Catalyzes the 2-thiolation of uridine at the wobble position (U34) of tRNA, leading to the formation of s(2)U34. This is tRNA-specific 2-thiouridylase MnmA from Acinetobacter baumannii (strain ACICU).